A 602-amino-acid chain; its full sequence is Aspartate--tRNA(Asp/Asn) ligase (602 aa).

Glu191 contacts L-aspartate. An aspartate region spans residues 215 to 218; it reads QLYK. L-aspartate is bound at residue Arg237. Residues 237-239 and Gln246 contribute to the ATP site; that span reads RDE. An L-aspartate-binding site is contributed by His465. Glu499 contacts ATP. Arg506 contacts L-aspartate. An ATP-binding site is contributed by 551–554; that stretch reads GLDR.

Belongs to the class-II aminoacyl-tRNA synthetase family. Type 1 subfamily. Homodimer.

The protein resides in the cytoplasm. The enzyme catalyses tRNA(Asx) + L-aspartate + ATP = L-aspartyl-tRNA(Asx) + AMP + diphosphate. Functionally, aspartyl-tRNA synthetase with relaxed tRNA specificity since it is able to aspartylate not only its cognate tRNA(Asp) but also tRNA(Asn). Reaction proceeds in two steps: L-aspartate is first activated by ATP to form Asp-AMP and then transferred to the acceptor end of tRNA(Asp/Asn). In Treponema pallidum (strain Nichols), this protein is Aspartate--tRNA(Asp/Asn) ligase.